Consider the following 89-residue polypeptide: MGISPERKKEIIESFKMHSSDTGSPEVQIALMTERINYLTEHFKTHKKDHHSRRGLIKLVAQRRKLLNYLKKIDKERYGKLIERLSIRK.

Belongs to the universal ribosomal protein uS15 family. As to quaternary structure, part of the 30S ribosomal subunit. Forms a bridge to the 50S subunit in the 70S ribosome, contacting the 23S rRNA.

In terms of biological role, one of the primary rRNA binding proteins, it binds directly to 16S rRNA where it helps nucleate assembly of the platform of the 30S subunit by binding and bridging several RNA helices of the 16S rRNA. Forms an intersubunit bridge (bridge B4) with the 23S rRNA of the 50S subunit in the ribosome. This Thermodesulfovibrio yellowstonii (strain ATCC 51303 / DSM 11347 / YP87) protein is Small ribosomal subunit protein uS15.